The sequence spans 39 residues: Potassium channel toxin alpha-KTx 2.24 (39 aa).

3 disulfides stabilise this stretch: Cys-7-Cys-29, Cys-13-Cys-34, and Cys-17-Cys-36.

This sequence belongs to the short scorpion toxin superfamily. Potassium channel inhibitor family. Alpha-KTx 02 subfamily. As to expression, expressed by the venom gland.

The protein localises to the secreted. In terms of biological role, blocks human voltage-gated potassium (Kv) channels Kv1.1/KCNA, Kv1.2/KCNA2 and Kv1.3/KCNA3. Exhibits high affinity for Kv1.2/KCNA2 and selectivity over Kv1.1/KCNA and Kv1.3/KCNA3. In Centruroides bonito (Scorpion), this protein is Potassium channel toxin alpha-KTx 2.24.